The primary structure comprises 146 residues: VVWTNEERSIISSIFSNLDYDDIGPKALCRCLIVYPWTQRHFTTFGNLYTPEAIMTNSKVAEHGVKVLHGLDRAVKNMDNIKATYYDLSILHSEKLHVDPDNFKLLSDCLTIVVAAKMGSGFTPETQAAFQKFLAVVVSALGKQYH.

In terms of domain architecture, Globin spans 2 to 146 (VWTNEERSII…VVSALGKQYH (145 aa)). Histidine 63 and histidine 92 together coordinate heme b.

Belongs to the globin family. As to quaternary structure, hb1 is a heterotetramer of two alpha chains and two beta-1 chains. Red blood cells.

Functionally, involved in oxygen transport from gills to the various peripheral tissues. The chain is Hemoglobin subunit beta-1 (hbb1) from Pseudaphritis urvillii (Congolli).